The primary structure comprises 504 residues: Cytochrome P450 71B7 (504 aa).

A helical membrane pass occupies residues 1–21; it reads MSILLCFLCLLPVFLVSLSIL. Lys82 participates in a covalent cross-link: Glycyl lysine isopeptide (Lys-Gly) (interchain with G-Cter in ubiquitin). Cys446 contacts heme.

The protein belongs to the cytochrome P450 family. Heme is required as a cofactor. In terms of tissue distribution, highly expressed in rosette leaves. Also expressed in roots, leaves, flowers, and siliques.

Its subcellular location is the membrane. This is Cytochrome P450 71B7 (CYP71B7) from Arabidopsis thaliana (Mouse-ear cress).